The following is a 923-amino-acid chain: DNA mismatch repair protein PMS1 (923 aa).

Composition is skewed to basic and acidic residues over residues 543-553, 565-581, and 591-601; these read DMTPSERDSEL, NVERHEREHEKPIRFEE, and GDVERVSEDNP. The segment at 543 to 603 is disordered; the sequence is DMTPSERDSE…ERVSEDNPRC (61 aa).

This sequence belongs to the DNA mismatch repair MutL/HexB family. In terms of assembly, heterodimer of MLH1 and PMS1, called MutLalpha, which is the major MMR MutL activity correcting base-base mismatches as well as IDLs. The heterodimer binds double strand DNA independently of a mismatch with positive cooperativity and has more than one DNA binding site. Forms a ternary complex with either the MSH2-MSH6 (MutSalpha) or the MSH2-MSH3 heterodimer (MutSbeta), which recognize and bind to mismatch DNA. Ternary complex formation is promoted by ATP binding. In terms of tissue distribution, expressed at very low levels in mature leaves. Detected in rapidly dividing tissues.

The protein localises to the nucleus. Functionally, required for DNA mismatch repair (MMR), correcting base-base mismatches and insertion-deletion loops (IDLs) resulting from DNA replication, DNA damage or from recombination events between non-identical sequences during meiosis. Component of the MutLalpha heterodimer that forms a ternary complex with the MutS heterodimers, which initially recognize the DNA mismatches. This complex is thought to be responsible for directing the downstream MMR events, including strand discrimination, excision, and resynthesis. Plays a major role in maintaining the genetic stability of simple sequence repeats and in the repair of heteroduplex sites present in meiotic recombination intermediates. Does not seem to be required for homologous somatic recombination. In Arabidopsis thaliana (Mouse-ear cress), this protein is DNA mismatch repair protein PMS1 (PMS1).